A 146-amino-acid chain; its full sequence is Large ribosomal subunit protein bL17 (146 aa).

A compositionally biased stretch (low complexity) spans 124-134; it reads EASRATRAAAS. Positions 124-146 are disordered; sequence EASRATRAAASKKAEEEAASEAE.

This sequence belongs to the bacterial ribosomal protein bL17 family. Part of the 50S ribosomal subunit. Contacts protein L32.

The polypeptide is Large ribosomal subunit protein bL17 (Corynebacterium kroppenstedtii (strain DSM 44385 / JCM 11950 / CIP 105744 / CCUG 35717)).